The sequence spans 94 residues: Co-chaperonin GroES (94 aa).

The protein belongs to the GroES chaperonin family. As to quaternary structure, heptamer of 7 subunits arranged in a ring. Interacts with the chaperonin GroEL.

It is found in the cytoplasm. Together with the chaperonin GroEL, plays an essential role in assisting protein folding. The GroEL-GroES system forms a nano-cage that allows encapsulation of the non-native substrate proteins and provides a physical environment optimized to promote and accelerate protein folding. GroES binds to the apical surface of the GroEL ring, thereby capping the opening of the GroEL channel. The polypeptide is Co-chaperonin GroES (Clostridium kluyveri (strain NBRC 12016)).